A 213-amino-acid chain; its full sequence is Endoplasmic reticulum vesicle protein 25 (213 aa).

Residues 1-20 form the signal peptide; that stretch reads MILRIPSLLYLFTLLTAVYA. Topologically, residues 21-181 are lumenal; it reads VKFDLTSDRN…TNESTNQRVK (161 aa). A GOLD domain is found at 33–122; that stretch reads PSIIWNFASA…VRSVELDVDI (90 aa). Residues 182 to 202 traverse the membrane as a helical segment; the sequence is VFSVLIICCTIGLGVWQLLHL. At 203 to 213 the chain is on the cytoplasmic side; it reads RSFFKRKYLID.

The protein belongs to the EMP24/GP25L family.

It localises to the endoplasmic reticulum membrane. The protein resides in the golgi apparatus membrane. In terms of biological role, constituent of COPII-coated endoplasmic reticulum-derived transport vesicles. Required for efficient transport of a subset of secretory proteins to the Golgi. Facilitates retrograde transport from the Golgi to the endoplasmic reticulum. The polypeptide is Endoplasmic reticulum vesicle protein 25 (ERV25) (Cryptococcus neoformans var. neoformans serotype D (strain B-3501A) (Filobasidiella neoformans)).